The chain runs to 209 residues: dITP/XTP pyrophosphatase (209 aa).

7 to 12 (SSHGYK) serves as a coordination point for substrate. The active-site Proton acceptor is Asp-70. Asp-70 lines the Mg(2+) pocket. Substrate-binding positions include Ser-71, 154 to 157 (FGYD), Lys-177, and 182 to 183 (HR).

This sequence belongs to the HAM1 NTPase family. In terms of assembly, homodimer. It depends on Mg(2+) as a cofactor.

It carries out the reaction XTP + H2O = XMP + diphosphate + H(+). The catalysed reaction is dITP + H2O = dIMP + diphosphate + H(+). The enzyme catalyses ITP + H2O = IMP + diphosphate + H(+). Pyrophosphatase that catalyzes the hydrolysis of nucleoside triphosphates to their monophosphate derivatives, with a high preference for the non-canonical purine nucleotides XTP (xanthosine triphosphate), dITP (deoxyinosine triphosphate) and ITP. Seems to function as a house-cleaning enzyme that removes non-canonical purine nucleotides from the nucleotide pool, thus preventing their incorporation into DNA/RNA and avoiding chromosomal lesions. In Chlamydia trachomatis serovar L2 (strain ATCC VR-902B / DSM 19102 / 434/Bu), this protein is dITP/XTP pyrophosphatase.